The chain runs to 551 residues: MEEAELVKGRLQAITDKRKIQEEISQKRLKIEEDKLKHQHLKKKALREKWLLDGISSGKEQEEMKKQNQQDQHQIQVLEQSILRLEKEIQDLEKAELQISTKEEAILKKLKSIERTTEDIIRSVKVEREERAEESIEDIYANIPDLPKSYIPSRLRKEINEEKEDDEQNRKALYAMEIKVEKDLKTGESTVLSSIPLPSDDFKGTGIKVYDDGQKSVYAVSSNHSAAYNGTDGLAPVEVEELLRQASERNSKSPTEYHEPVYANPFYRPTTPQRETVTPGPNFQERIKIKTNGLGIGVNESIHNMGNGLSEERGNNFNHISPIPPVPHPRSVIQQAEEKLHTPQKRLMTPWEESNVMQDKDAPSPKPRLSPRETIFGKSEHQNSSPTCQEDEEDVRYNIVHSLPPDINDTEPVTMIFMGYQQAEDSEEDKKFLTGYDGIIHAELVVIDDEEEEDEGEAEKPSYHPIAPHSQVYQPAKPTPLPRKRSEASPHENTNHKSPHKNSISLKEQEESLGSPVHHSPFDAQTTGDGTEDPSLTALRMRMAKLGKKVI.

Methionine 1 is modified (N-acetylmethionine). Residues 12–106 (QAITDKRKIQ…LQISTKEEAI (95 aa)) are a coiled coil. A Glycyl lysine isopeptide (Lys-Gly) (interchain with G-Cter in SUMO2) cross-link involves residue lysine 125. Residue serine 135 is modified to Phosphoserine. A Glycyl lysine isopeptide (Lys-Gly) (interchain with G-Cter in SUMO1); alternate cross-link involves residue lysine 179. A Glycyl lysine isopeptide (Lys-Gly) (interchain with G-Cter in SUMO2); alternate cross-link involves residue lysine 179. Over residues 248 to 259 (ERNSKSPTEYHE) the composition is skewed to basic and acidic residues. The interval 248-280 (ERNSKSPTEYHEPVYANPFYRPTTPQRETVTPG) is disordered. Polar residues predominate over residues 270-280 (TTPQRETVTPG). Position 271 is a phosphothreonine (threonine 271). Phosphoserine occurs at positions 321, 370, 384, and 385. Disordered stretches follow at residues 342 to 392 (TPQK…QEDE) and 449 to 535 (DEEE…EDPS). Over residues 484–495 (KRSEASPHENTN) the composition is skewed to basic and acidic residues. A phosphoserine mark is found at serine 498, serine 515, and serine 520.

Belongs to the paralemmin family. As to quaternary structure, interacts with GLUL. Post-translationally, phosphorylated. In terms of tissue distribution, ubiquitous. Most abundant in cardiac and skeletal muscle.

The protein localises to the cytoplasm. The protein resides in the cell projection. It is found in the dendrite. It localises to the dendritic spine. The sequence is that of Palmdelphin (PALMD) from Homo sapiens (Human).